Reading from the N-terminus, the 231-residue chain is RING finger protein 141 (231 aa).

Gly2 carries the N-myristoyl glycine lipid modification. Residues 156-193 (CCICMDGRADLILPCAHSFCQKCIDKWSDRHRNCPICR) form an RING-type zinc finger.

It localises to the membrane. Functionally, may be involved in spermatogenesis. In Canis lupus familiaris (Dog), this protein is RING finger protein 141 (RNF141).